The sequence spans 156 residues: Peptide deformylase (156 aa).

The Fe cation site is built by C90 and H132. E133 is an active-site residue. A Fe cation-binding site is contributed by H136.

It belongs to the polypeptide deformylase family. It depends on Fe(2+) as a cofactor.

It catalyses the reaction N-terminal N-formyl-L-methionyl-[peptide] + H2O = N-terminal L-methionyl-[peptide] + formate. Its function is as follows. Removes the formyl group from the N-terminal Met of newly synthesized proteins. Requires at least a dipeptide for an efficient rate of reaction. N-terminal L-methionine is a prerequisite for activity but the enzyme has broad specificity at other positions. The chain is Peptide deformylase from Natranaerobius thermophilus (strain ATCC BAA-1301 / DSM 18059 / JW/NM-WN-LF).